A 72-amino-acid polypeptide reads, in one-letter code: Conotoxin Lt6.3 (72 aa).

Positions 1 to 22 are cleaved as a signal peptide; the sequence is MKLTSVVIVAVLFLAACQLTTS. A propeptide spanning residues 23 to 46 is cleaved from the precursor; it reads DGSRGTWKDRAVRSITKVSMLRWP. 3 cysteine pairs are disulfide-bonded: cysteine 47–cysteine 61, cysteine 54–cysteine 64, and cysteine 60–cysteine 71.

Belongs to the conotoxin O1 superfamily. Expressed by the venom duct.

It localises to the secreted. The protein is Conotoxin Lt6.3 of Conus litteratus (Lettered cone).